The following is a 600-amino-acid chain: Sulfite reductase [NADPH] flavoprotein alpha-component (600 aa).

A Flavodoxin-like domain is found at 63–201; that stretch reads ITLISASQTG…AAQAWRQRVV (139 aa). FMN-binding positions include 69 to 74, 116 to 119, and 152 to 161; these read SQTGNA, STQG, and LGDTSYEHFC. The FAD-binding FR-type domain occupies 235–449; that stretch reads ESPLTATLSV…IEHNDNFRLP (215 aa). Residues Thr323, Ala357, 387–390, 405–407, and 420–423 each bind FAD; these read RLYS, TVG, and GGAS. Residues 520-521, 526-530, and Asp562 contribute to the NADP(+) site; these read SR and KIYVQ. Tyr600 contributes to the FAD binding site.

It belongs to the NADPH-dependent sulphite reductase flavoprotein subunit CysJ family. The protein in the N-terminal section; belongs to the flavodoxin family. In the C-terminal section; belongs to the flavoprotein pyridine nucleotide cytochrome reductase family. In terms of assembly, alpha(8)-beta(8). The alpha component is a flavoprotein, the beta component is a hemoprotein. FAD is required as a cofactor. Requires FMN as cofactor.

It catalyses the reaction hydrogen sulfide + 3 NADP(+) + 3 H2O = sulfite + 3 NADPH + 4 H(+). It functions in the pathway sulfur metabolism; hydrogen sulfide biosynthesis; hydrogen sulfide from sulfite (NADPH route): step 1/1. Functionally, component of the sulfite reductase complex that catalyzes the 6-electron reduction of sulfite to sulfide. This is one of several activities required for the biosynthesis of L-cysteine from sulfate. The flavoprotein component catalyzes the electron flow from NADPH -&gt; FAD -&gt; FMN to the hemoprotein component. The chain is Sulfite reductase [NADPH] flavoprotein alpha-component from Cronobacter sakazakii (strain ATCC BAA-894) (Enterobacter sakazakii).